Reading from the N-terminus, the 251-residue chain is tRNA (guanine-N(7)-)-methyltransferase (251 aa).

S-adenosyl-L-methionine is bound by residues glutamate 69, glutamate 94, aspartate 121, and aspartate 143. Aspartate 143 is a catalytic residue. Substrate contacts are provided by lysine 147 and aspartate 179.

It belongs to the class I-like SAM-binding methyltransferase superfamily. TrmB family.

It carries out the reaction guanosine(46) in tRNA + S-adenosyl-L-methionine = N(7)-methylguanosine(46) in tRNA + S-adenosyl-L-homocysteine. Its pathway is tRNA modification; N(7)-methylguanine-tRNA biosynthesis. Functionally, catalyzes the formation of N(7)-methylguanine at position 46 (m7G46) in tRNA. This is tRNA (guanine-N(7)-)-methyltransferase from Rhodopseudomonas palustris (strain BisB18).